Consider the following 1005-residue polypeptide: Band 4.1-like protein 2 (1005 aa).

The disordered stretch occupies residues 1–80; that stretch reads MTTEVGSVSE…SRGISRFIPP (80 aa). Threonine 2 carries the post-translational modification N-acetylthreonine. Residue serine 7 is modified to Phosphoserine. Residues 22–31 show a composition bias toward basic and acidic residues; the sequence is ATKEKPKEVA. Phosphoserine is present on residues serine 39, serine 58, and serine 87. Threonine 89 bears the Phosphothreonine mark. Positions 93 to 196 are disordered; sequence AKDGGDKKEP…GGAAKRETKE (104 aa). Basic and acidic residues-rich tracts occupy residues 111–157 and 169–196; these read VLDK…EKPS and VSKEREEKVKETQEDKLEGGAAKRETKE. Glycyl lysine isopeptide (Lys-Gly) (interchain with G-Cter in SUMO2) cross-links involve residues lysine 140 and lysine 144. Residues serine 170, serine 208, serine 386, serine 402, serine 499, serine 550, serine 562, serine 575, serine 598, and serine 614 each carry the phosphoserine modification. In terms of domain architecture, FERM spans 218-499; sequence VQCKVTLLDG…EHHTFYRLVS (282 aa). The interval 502–610 is hydrophilic; sequence QPPKAKFLTL…KAPHLQLIEG (109 aa). Residues 611 to 676 form a spectrin--actin-binding region; it reads KKNSLRVEGD…WEKRRITPLS (66 aa). Tyrosine 623 carries the phosphotyrosine modification. Residues serine 627 and serine 647 each carry the phosphoserine modification. Residues 652–800 form a disordered region; sequence KRNFMESTPE…EEAVPEASPV (149 aa). Over residues 675-686 the composition is skewed to polar residues; sequence LSLQTQGSSHET. Over residues 690–711 the composition is skewed to basic and acidic residues; sequence VEEKKRAEVGKDERVITEEMNG. Serine 715 and serine 718 each carry phosphoserine. Over residues 734–746 the composition is skewed to low complexity; that stretch reads STSLSSESSSSSS. 2 stretches are compositionally biased toward basic and acidic residues: residues 754–770 and 780–793; these read GEYRPHHRVTEGTIREE and EPRPAAKVVEREEA. Threonine 763 bears the Phosphothreonine mark. Serine 828 carries the phosphoserine modification. The segment at 855 to 1005 is C-terminal (CTD); sequence HVDIDVLPQI…ETELAEEGED (151 aa).

As to quaternary structure, interacts with FCGR1A. Interacts with TRPC4. Interacts (via CTD domain) with FKBP2. Interacts with NUMA1; this interaction is negatively regulated by CDK1 during metaphase and promotes anaphase-specific localization of NUMA1 in symmetrically dividing cells. As to expression, widely expressed.

Its subcellular location is the cytoplasm. It is found in the cytoskeleton. It localises to the cell cortex. The protein localises to the cell membrane. Required for dynein-dynactin complex and NUMA1 recruitment at the mitotic cell cortex during anaphase. This chain is Band 4.1-like protein 2, found in Homo sapiens (Human).